A 390-amino-acid polypeptide reads, in one-letter code: Cyclic amide hydrolase (390 aa).

Residues 1–118 form an RU A region; sequence MPNPEASLSP…TVVTQEWVAD (118 aa). Substrate is bound by residues R66 and 97-98; that span reads SG. Residues 127-268 form an RU B region; sequence GLVVGRGHTE…GEVLLLANSA (142 aa). Residue K177 is part of the active site. Substrate contacts are provided by residues N213, 251 to 252, K346, and 365 to 366; these read SS and SG. S251 functions as the Nucleophile in the catalytic mechanism. The interval 274–390 is RU C; that stretch reads LRIGHGITRD…VAAVVRRLPA (117 aa).

This sequence belongs to the cyclic amide hydrolase (CyAH) family. In terms of assembly, homotetramer; disulfide-linked. The disulfide forms between 2 monomers in the tetramer, such that each tetramer contains 2 sets of vicinal disulfides.

In terms of biological role, cyclic amide hydrolase of unknown substrate specificity. Catalyzes the hydrolytic ring-opening of a cyclic amide. Does not act on cyanuric acid nor barbituric acid. The protein is Cyclic amide hydrolase of Pseudofrankia inefficax (strain DSM 45817 / CECT 9037 / DDB 130130 / EuI1c) (Frankia inefficax).